The primary structure comprises 349 residues: MGSNDPSTPSKASKPPEQEQPPATTSGTTAPVYPEWPGFQGYPAMPPHGFFPPPVAAGQAHPYMWGPQHMVPPYGTPPPPYMMYPPGTVYAHPTAPGVHPFHYPMQTNGNLEPAGAQGAAPGAAETNGKNEPGKTSGPSANGVTSNSESGSDSESEGSDANSQNDSHSKENDVNENGSAQNGVSHSSSHGTFNKPMPLVPVQSGAVIGVAGPATNLNIGMDYWGATGSSPVPAMRGKVPSGSARGEQWDERELKKQKRKLSNRESARRSRLRKQAECEELGQRAEALKSENSSLRIELDRIKKEYEELLSKNTSLKAKLGESGGGGGSDAVPDMNERGDTNGGSHQKEP.

Over residues 1-11 (MGSNDPSTPSK) the composition is skewed to polar residues. 4 disordered regions span residues 1–39 (MGSN…WPGF), 101–196 (FHYP…NKPM), 224–277 (GATG…QAEC), and 312–349 (NTSL…QKEP). The segment covering 113-124 (PAGAQGAAPGAA) has biased composition (low complexity). The segment covering 174-191 (NENGSAQNGVSHSSSHGT) has biased composition (polar residues). The 64-residue stretch at 252–315 (ELKKQKRKLS…EELLSKNTSL (64 aa)) folds into the bZIP domain. The basic motif stretch occupies residues 254 to 273 (KKQKRKLSNRESARRSRLRK). Basic and acidic residues predominate over residues 261 to 277 (SNRESARRSRLRKQAEC). Residues 280 to 315 (LGQRAEALKSENSSLRIELDRIKKEYEELLSKNTSL) form a leucine-zipper region. The segment covering 334–349 (MNERGDTNGGSHQKEP) has biased composition (basic and acidic residues).

This sequence belongs to the bZIP family. As to quaternary structure, binds DNA as a dimer.

It localises to the nucleus. In terms of biological role, binds to the hexamer motif 5'-ACGTCA-3' of histone gene promoters. The sequence is that of Transcription factor HBP-1a from Triticum aestivum (Wheat).